Here is a 699-residue protein sequence, read N- to C-terminus: DNA ligase (699 aa).

The disordered stretch occupies residues 1-29 (MSDADVDAESNPYLRDPPTEFEPAESLSR). Residues 60 to 64 (DAAYD), 108 to 109 (SI), and glutamate 137 contribute to the NAD(+) site. The active-site N6-AMP-lysine intermediate is the lysine 139. NAD(+)-binding residues include arginine 160, glutamate 196, lysine 311, and lysine 335. Residues cysteine 425, cysteine 428, cysteine 441, and cysteine 447 each contribute to the Zn(2+) site. One can recognise a BRCT domain in the interval 613 to 666 (SGGDELDGLTFVVTGTLAASRSDVTELVESHGGNVTGSVSGNTDYLVVGENPGR).

The protein belongs to the NAD-dependent DNA ligase family. LigA subfamily. It depends on Mg(2+) as a cofactor. The cofactor is Mn(2+).

It catalyses the reaction NAD(+) + (deoxyribonucleotide)n-3'-hydroxyl + 5'-phospho-(deoxyribonucleotide)m = (deoxyribonucleotide)n+m + AMP + beta-nicotinamide D-nucleotide.. With respect to regulation, displays maximal in vitro activity at high salt levels. Its function is as follows. DNA ligase that catalyzes the formation of phosphodiester linkages between 5'-phosphoryl and 3'-hydroxyl groups in double-stranded DNA using NAD as a coenzyme and as the energy source for the reaction. It is essential for DNA replication and repair of damaged DNA. This chain is DNA ligase, found in Haloferax volcanii (strain ATCC 29605 / DSM 3757 / JCM 8879 / NBRC 14742 / NCIMB 2012 / VKM B-1768 / DS2) (Halobacterium volcanii).